Consider the following 255-residue polypeptide: Snake venom serine protease HS112 (255 aa).

An N-terminal signal peptide occupies residues 1–18 (MVLIRVIANLLILQLSYA). Residues 19-24 (QKSSEL) constitute a propeptide that is removed on maturation. Residues 25 to 246 (VIGGDECDIN…YLPWIQSIIA (222 aa)) form the Peptidase S1 domain. 6 cysteine pairs are disulfide-bonded: cysteine 31/cysteine 162, cysteine 49/cysteine 65, cysteine 97/cysteine 253, cysteine 141/cysteine 207, cysteine 173/cysteine 186, and cysteine 197/cysteine 222. Residues histidine 64 and aspartate 109 each act as charge relay system in the active site. N-linked (GlcNAc...) asparagine glycosylation occurs at asparagine 169. The Charge relay system role is filled by serine 201. Asparagine 248 is a glycosylation site (N-linked (GlcNAc...) asparagine).

This sequence belongs to the peptidase S1 family. Snake venom subfamily. Monomer. In terms of tissue distribution, expressed by the venom gland.

Its subcellular location is the secreted. Functionally, snake venom serine protease that may act in the hemostasis system of the prey. In Bothrops jararaca (Jararaca), this protein is Snake venom serine protease HS112.